The following is a 311-amino-acid chain: Aspartate carbamoyltransferase catalytic subunit (311 aa).

Carbamoyl phosphate contacts are provided by Arg-58 and Thr-59. Residue Lys-86 participates in L-aspartate binding. Positions 108, 136, and 139 each coordinate carbamoyl phosphate. L-aspartate contacts are provided by Arg-169 and Arg-223. Carbamoyl phosphate is bound by residues Gly-264 and Pro-265.

It belongs to the aspartate/ornithine carbamoyltransferase superfamily. ATCase family. In terms of assembly, heterododecamer (2C3:3R2) of six catalytic PyrB chains organized as two trimers (C3), and six regulatory PyrI chains organized as three dimers (R2).

The catalysed reaction is carbamoyl phosphate + L-aspartate = N-carbamoyl-L-aspartate + phosphate + H(+). It functions in the pathway pyrimidine metabolism; UMP biosynthesis via de novo pathway; (S)-dihydroorotate from bicarbonate: step 2/3. Its function is as follows. Catalyzes the condensation of carbamoyl phosphate and aspartate to form carbamoyl aspartate and inorganic phosphate, the committed step in the de novo pyrimidine nucleotide biosynthesis pathway. In Ruegeria pomeroyi (strain ATCC 700808 / DSM 15171 / DSS-3) (Silicibacter pomeroyi), this protein is Aspartate carbamoyltransferase catalytic subunit.